The primary structure comprises 388 residues: Translation initiation factor eIF2B subunit beta (388 aa).

Residues 109 to 133 (DDFETTTSNNNNNNNNNNINSSSNI) form a disordered region. A compositionally biased stretch (low complexity) spans 116–133 (SNNNNNNNNNNINSSSNI).

The protein belongs to the eIF-2B alpha/beta/delta subunits family. Component of the translation initiation factor 2B (eIF2B) complex which is a heterodecamer of two sets of five different subunits: alpha, beta, gamma, delta and epsilon. Subunits alpha, beta and delta comprise a regulatory subcomplex and subunits epsilon and gamma comprise a catalytic subcomplex. Within the complex, the hexameric regulatory complex resides at the center, with the two heterodimeric catalytic subcomplexes bound on opposite sides.

It is found in the cytoplasm. The protein resides in the cytosol. Acts as a component of the translation initiation factor 2B (eIF2B) complex, which catalyzes the exchange of GDP for GTP on eukaryotic initiation factor 2 (eIF2) gamma subunit. Its guanine nucleotide exchange factor activity is repressed when bound to eIF2 complex phosphorylated on the alpha subunit, thereby limiting the amount of methionyl-initiator methionine tRNA available to the ribosome and consequently global translation is repressed. This is Translation initiation factor eIF2B subunit beta (eif2b2) from Dictyostelium discoideum (Social amoeba).